The following is a 96-amino-acid chain: Co-chaperonin GroES (96 aa).

The protein belongs to the GroES chaperonin family. As to quaternary structure, heptamer of 7 subunits arranged in a ring. Interacts with the chaperonin GroEL.

Its subcellular location is the cytoplasm. In terms of biological role, together with the chaperonin GroEL, plays an essential role in assisting protein folding. The GroEL-GroES system forms a nano-cage that allows encapsulation of the non-native substrate proteins and provides a physical environment optimized to promote and accelerate protein folding. GroES binds to the apical surface of the GroEL ring, thereby capping the opening of the GroEL channel. This is Co-chaperonin GroES from Shewanella loihica (strain ATCC BAA-1088 / PV-4).